Reading from the N-terminus, the 415-residue chain is Gamma-glutamyl phosphate reductase (415 aa).

This sequence belongs to the gamma-glutamyl phosphate reductase family.

The protein localises to the cytoplasm. The catalysed reaction is L-glutamate 5-semialdehyde + phosphate + NADP(+) = L-glutamyl 5-phosphate + NADPH + H(+). It participates in amino-acid biosynthesis; L-proline biosynthesis; L-glutamate 5-semialdehyde from L-glutamate: step 2/2. Catalyzes the NADPH-dependent reduction of L-glutamate 5-phosphate into L-glutamate 5-semialdehyde and phosphate. The product spontaneously undergoes cyclization to form 1-pyrroline-5-carboxylate. In Psychromonas ingrahamii (strain DSM 17664 / CCUG 51855 / 37), this protein is Gamma-glutamyl phosphate reductase.